We begin with the raw amino-acid sequence, 324 residues long: Acetyl-coenzyme A carboxylase carboxyl transferase subunit alpha (324 aa).

Positions I37–Q291 constitute a CoA carboxyltransferase C-terminal domain.

It belongs to the AccA family. As to quaternary structure, acetyl-CoA carboxylase is a heterohexamer composed of biotin carboxyl carrier protein (AccB), biotin carboxylase (AccC) and two subunits each of ACCase subunit alpha (AccA) and ACCase subunit beta (AccD).

It is found in the cytoplasm. It carries out the reaction N(6)-carboxybiotinyl-L-lysyl-[protein] + acetyl-CoA = N(6)-biotinyl-L-lysyl-[protein] + malonyl-CoA. It participates in lipid metabolism; malonyl-CoA biosynthesis; malonyl-CoA from acetyl-CoA: step 1/1. Functionally, component of the acetyl coenzyme A carboxylase (ACC) complex. First, biotin carboxylase catalyzes the carboxylation of biotin on its carrier protein (BCCP) and then the CO(2) group is transferred by the carboxyltransferase to acetyl-CoA to form malonyl-CoA. The chain is Acetyl-coenzyme A carboxylase carboxyl transferase subunit alpha from Bacillus cereus (strain G9842).